The chain runs to 399 residues: Acetate kinase (399 aa).

Asn-7 serves as a coordination point for Mg(2+). Lys-14 serves as a coordination point for ATP. Residue Arg-89 coordinates substrate. Asp-146 serves as the catalytic Proton donor/acceptor. ATP is bound by residues 206-210 (HLGNG), 280-282 (DMR), and 328-332 (GIGEN). Residue Glu-382 participates in Mg(2+) binding.

The protein belongs to the acetokinase family. As to quaternary structure, homodimer. The cofactor is Mg(2+). It depends on Mn(2+) as a cofactor.

Its subcellular location is the cytoplasm. It catalyses the reaction acetate + ATP = acetyl phosphate + ADP. It functions in the pathway metabolic intermediate biosynthesis; acetyl-CoA biosynthesis; acetyl-CoA from acetate: step 1/2. Functionally, catalyzes the formation of acetyl phosphate from acetate and ATP. Can also catalyze the reverse reaction. The chain is Acetate kinase from Campylobacter fetus subsp. fetus (strain 82-40).